We begin with the raw amino-acid sequence, 189 residues long: Elongation factor P (189 aa).

Belongs to the elongation factor P family.

The protein resides in the cytoplasm. It functions in the pathway protein biosynthesis; polypeptide chain elongation. Its function is as follows. Involved in peptide bond synthesis. Stimulates efficient translation and peptide-bond synthesis on native or reconstituted 70S ribosomes in vitro. Probably functions indirectly by altering the affinity of the ribosome for aminoacyl-tRNA, thus increasing their reactivity as acceptors for peptidyl transferase. This chain is Elongation factor P, found in Campylobacter fetus subsp. fetus (strain 82-40).